The following is a 375-amino-acid chain: Nicotinate-nucleotide--dimethylbenzimidazole phosphoribosyltransferase (375 aa).

Glu-323 (proton acceptor) is an active-site residue. The interval 344–375 (LPEKPEELEAGEGPEAAEESSPEPENPEALAE) is disordered. Residues 351-375 (LEAGEGPEAAEESSPEPENPEALAE) show a composition bias toward acidic residues.

Belongs to the CobT family.

It catalyses the reaction 5,6-dimethylbenzimidazole + nicotinate beta-D-ribonucleotide = alpha-ribazole 5'-phosphate + nicotinate + H(+). It functions in the pathway nucleoside biosynthesis; alpha-ribazole biosynthesis; alpha-ribazole from 5,6-dimethylbenzimidazole: step 1/2. Functionally, catalyzes the synthesis of alpha-ribazole-5'-phosphate from nicotinate mononucleotide (NAMN) and 5,6-dimethylbenzimidazole (DMB). The sequence is that of Nicotinate-nucleotide--dimethylbenzimidazole phosphoribosyltransferase from Streptomyces avermitilis (strain ATCC 31267 / DSM 46492 / JCM 5070 / NBRC 14893 / NCIMB 12804 / NRRL 8165 / MA-4680).